The primary structure comprises 342 residues: Aquaporin-8 (342 aa).

Helical transmembrane passes span 55–75, 98–118, and 126–146; these read FLAV…AIFT, VAGG…FAVL, and CIFY…TMFA. Residues 108 to 110 carry the NPA 1 motif; the sequence is NPA. A glycan (N-linked (GlcNAc...) asparagine) is linked at Asn-166. 2 consecutive transmembrane segments (helical) span residues 184 to 204 and 215 to 235; these read TAFA…LAMC and FLPI…SYNA. Residues 240 to 242 carry the NPA 2 motif; that stretch reads NPS. The chain crosses the membrane as a helical span at residues 266-286; it reads YTWFFVPVLGSHCGAIIGGAI. Over residues 302–327 the composition is skewed to polar residues; sequence TNSVSSMSYNEDNSTLTKRKQVSNIV. The tract at residues 302 to 342 is disordered; that stretch reads TNSVSSMSYNEDNSTLTKRKQVSNIVHDSKGAKGSSTAPVN. A glycan (N-linked (GlcNAc...) asparagine) is linked at Asn-314.

This sequence belongs to the MIP/aquaporin (TC 1.A.8) family.

Its subcellular location is the cell membrane. In terms of biological role, aquaglyceroporin that may modulate the water content and osmolytes during anhydrobiosis. This is Aquaporin-8 from Milnesium tardigradum (Water bear).